Consider the following 664-residue polypeptide: Macrolide export ATP-binding/permease protein MacB (664 aa).

An ABC transporter domain is found at 8–246 (LEVHNLVREF…ELNKDPDAAP (239 aa)). 44 to 51 (GQSGSGKS) provides a ligand contact to ATP. Transmembrane regions (helical) follow at residues 287-307 (FLTMLGIIIGIASVVTVVALG), 543-563 (IAVISLIVGGIGVMNIMLVSV), 587-607 (FLIEAILVCLIGGVLGVLLSL), and 629-649 (SIVAAFVCSTLIGVVFGFLPA).

It belongs to the ABC transporter superfamily. Macrolide exporter (TC 3.A.1.122) family. Homodimer. Part of the tripartite efflux system MacAB-TolC, which is composed of an inner membrane transporter, MacB, a periplasmic membrane fusion protein, MacA, and an outer membrane component, TolC. The complex forms a large protein conduit and can translocate molecules across both the inner and outer membranes. Interacts with MacA.

Its subcellular location is the cell inner membrane. Its function is as follows. Part of the tripartite efflux system MacAB-TolC. MacB is a non-canonical ABC transporter that contains transmembrane domains (TMD), which form a pore in the inner membrane, and an ATP-binding domain (NBD), which is responsible for energy generation. Confers resistance against macrolides. This is Macrolide export ATP-binding/permease protein MacB from Acinetobacter baylyi (strain ATCC 33305 / BD413 / ADP1).